Here is a 428-residue protein sequence, read N- to C-terminus: Gamma-glutamyl phosphate reductase (428 aa).

It belongs to the gamma-glutamyl phosphate reductase family.

It is found in the cytoplasm. It catalyses the reaction L-glutamate 5-semialdehyde + phosphate + NADP(+) = L-glutamyl 5-phosphate + NADPH + H(+). It functions in the pathway amino-acid biosynthesis; L-proline biosynthesis; L-glutamate 5-semialdehyde from L-glutamate: step 2/2. Its function is as follows. Catalyzes the NADPH-dependent reduction of L-glutamate 5-phosphate into L-glutamate 5-semialdehyde and phosphate. The product spontaneously undergoes cyclization to form 1-pyrroline-5-carboxylate. The protein is Gamma-glutamyl phosphate reductase of Chelativorans sp. (strain BNC1).